The chain runs to 135 residues: Transcriptional activator protein (135 aa).

Positions 17–32 match the Nuclear localization signal motif; sequence KIQHHIAKKRQVRRRR. The segment at 37–54 is a zinc-finger region; that stretch reads CGCSYYIHLDCINHGFTH. Positions 120 to 135 are transactivation; sequence HLDDLTVSDWSFFKSL.

It belongs to the geminiviridae transcriptional activator protein family. In terms of assembly, monomer. Homodimer. Homooligomer. Self-interaction correlates with nuclear localization and efficient activation of transcription. Monomers suppress local silencing by interacting with and inactivating host adenosine kinase 2 (ADK2) in the cytoplasm. Interacts with and inhibits host SNF1 kinase. Binds to ssDNA. In terms of processing, phosphorylated.

The protein resides in the host nucleus. It localises to the host cytoplasm. Functionally, strong activator of the late viral genes promoters. Acts as a suppressor of RNA-mediated gene silencing, also known as post-transcriptional gene silencing (PTGS), a mechanism of plant viral defense that limits the accumulation of viral RNAs. TrAP suppresses the host RNA silencing by inhibiting adenosine kinase 2 (ADK2), a kinase involved in a general methylation pathway. Also suppresses the host basal defense by interacting with and inhibiting SNF1 kinase, a key regulator of cell metabolism implicated in innate antiviral defense. Determines pathogenicity. The chain is Transcriptional activator protein from Tomato yellow leaf curl Sardinia virus (isolate Spain-2) (TYLCSV).